Reading from the N-terminus, the 591-residue chain is Phenylalanine--tRNA ligase beta subunit (591 aa).

One can recognise a B5 domain in the interval 304 to 380 (LSYREMTVTT…VAFGYNNLIT (77 aa)). Residues aspartate 358, aspartate 364, glutamate 367, and aspartate 368 each coordinate Mg(2+).

It belongs to the phenylalanyl-tRNA synthetase beta subunit family. Type 2 subfamily. In terms of assembly, tetramer of two alpha and two beta subunits. The cofactor is Mg(2+).

The protein localises to the cytoplasm. The catalysed reaction is tRNA(Phe) + L-phenylalanine + ATP = L-phenylalanyl-tRNA(Phe) + AMP + diphosphate + H(+). This chain is Phenylalanine--tRNA ligase beta subunit, found in Caenorhabditis elegans.